The sequence spans 270 residues: tRNA pseudouridine synthase A (270 aa).

Asp-52 acts as the Nucleophile in catalysis. Position 110 (Tyr-110) interacts with substrate.

The protein belongs to the tRNA pseudouridine synthase TruA family. In terms of assembly, homodimer.

The enzyme catalyses uridine(38/39/40) in tRNA = pseudouridine(38/39/40) in tRNA. Functionally, formation of pseudouridine at positions 38, 39 and 40 in the anticodon stem and loop of transfer RNAs. This Roseiflexus castenholzii (strain DSM 13941 / HLO8) protein is tRNA pseudouridine synthase A.